The sequence spans 423 residues: MIIDKTLFLKKYLNQSSLNEDLYPIVKDICENVRLHGDDALRNYNQQFDQVETCNLEVAYQTLENAYNRLDSDLREALQQSHARIQSYQESIKWTKQQGTSDCYELYHPLERVGVYVPGGKASYPSTVLMTVTLAKVAGVKNISVVTPPQLNGIPDIVLAACYIAGVDNVYQVGGAQSIAALAYGTETLPKVDKIVGPGNQFVAYAKKYLFGQVGIDQIAGPSEIALIIDDSADLDAIAYDVFAQAEHDELARTFVISEDEALLKQLEQKIQHILPQIERQSIVQASLNDNHFLIHVNNFSEACDLMNQIAPEHASIQTVSPHDYLNHVRYVGALFLGYYSPEVIGDYVAGPSHVLPTNQTARFTNGLSVNDFLTRHSVIDLSKDTFDTVELTARKLAHVEQLYNHEQSIEIRTSKEFNDDKN.

Residues Tyr-116, Gln-177, and Asn-200 each coordinate NAD(+). The substrate site is built by Ser-223, Gln-245, and His-248. Residues Gln-245 and His-248 each coordinate Zn(2+). Catalysis depends on proton acceptor residues Glu-313 and His-314. Substrate is bound by residues His-314, Asp-347, Glu-401, and His-406. Asp-347 is a binding site for Zn(2+). Residue His-406 participates in Zn(2+) binding.

Belongs to the histidinol dehydrogenase family. It depends on Zn(2+) as a cofactor.

It catalyses the reaction L-histidinol + 2 NAD(+) + H2O = L-histidine + 2 NADH + 3 H(+). Its pathway is amino-acid biosynthesis; L-histidine biosynthesis; L-histidine from 5-phospho-alpha-D-ribose 1-diphosphate: step 9/9. Functionally, catalyzes the sequential NAD-dependent oxidations of L-histidinol to L-histidinaldehyde and then to L-histidine. The polypeptide is Histidinol dehydrogenase (Staphylococcus saprophyticus subsp. saprophyticus (strain ATCC 15305 / DSM 20229 / NCIMB 8711 / NCTC 7292 / S-41)).